A 151-amino-acid polypeptide reads, in one-letter code: Neuroglobin (151 aa).

Positions 1 to 149 constitute a Globin domain; that stretch reads MERPEQELIR…VVQAMSRGWD (149 aa). Heme b contacts are provided by His-64 and His-96.

It belongs to the globin family. In terms of assembly, monomer. Homodimer and homotetramer; disulfide-linked. Mainly monomeric but also detected as part of homodimers and homotetramers. Interacts with 14-3-3 proteins; regulates the phosphorylation of NGB. Could interact (ferrous form) with G-alpha(i) proteins (GTP-bound form). Post-translationally, phosphorylated during hypoxia by ERK1/ERK2. Phosphorylation regulates the heme pocket hexacoordination preventing the association of His-64 with the heme metal center. Thereby, promotes the access of dioxygen and nitrite to the heme and stimulates the nitrite reductase activity. Phosphorylation during hypoxia is stabilized by 14-3-3 proteins.

It is found in the cytoplasm. The protein localises to the cytosol. Its subcellular location is the mitochondrion matrix. The enzyme catalyses Fe(III)-heme b-[protein] + nitric oxide + H2O = Fe(II)-heme b-[protein] + nitrite + 2 H(+). Its function is as follows. Monomeric globin with a bis-histidyl six-coordinate heme-iron atom through which it can bind dioxygen, carbon monoxide and nitric oxide. Could help transport oxygen and increase its availability to the metabolically active neuronal tissues, though its low quantity in tissues as well as its high affinity for dioxygen, which may limit its oxygen-releasing ability, argue against it. The ferrous/deoxygenated form exhibits a nitrite reductase activity and it could produce nitric oxide which in turn inhibits cellular respiration in response to hypoxia. In its ferrous/deoxygenated state, it may also exhibit GDI (Guanine nucleotide Dissociation Inhibitor) activity toward heterotrimeric G-alpha proteins, thereby regulating signal transduction to facilitate neuroprotective responses in the wake of hypoxia and associated oxidative stress. This is Neuroglobin from Oryctolagus cuniculus (Rabbit).